The following is a 533-amino-acid chain: T-complex protein 1 subunit delta (533 aa).

Residues 1–24 (MVVKPAARGMKPQGQAYKDKSKPA) form a disordered region.

The protein belongs to the TCP-1 chaperonin family. As to quaternary structure, heterooligomeric complex of about 850 to 900 kDa that forms two stacked rings, 12 to 16 nm in diameter.

It is found in the cytoplasm. Its function is as follows. Molecular chaperone; assists the folding of proteins upon ATP hydrolysis. Known to play a role, in vitro, in the folding of actin and tubulin. The protein is T-complex protein 1 subunit delta of Ochlerotatus triseriatus (Eastern treehole mosquito).